The primary structure comprises 411 residues: Na(+)-translocating NADH-quinone reductase subunit F (411 aa).

A helical membrane pass occupies residues 5–25 (VILALGIAAFTVIVLVLVAII). Residues 36–130 (GDITIDINDD…NMEVELPEEI (95 aa)) form the 2Fe-2S ferredoxin-type domain. Residues Cys-73, Cys-79, Cys-82, and Cys-114 each coordinate [2Fe-2S] cluster. The 141-residue stretch at 133–273 (VKKWECTVIS…SGPFGEFFAK (141 aa)) folds into the FAD-binding FR-type domain.

The protein belongs to the NqrF family. Composed of six subunits; NqrA, NqrB, NqrC, NqrD, NqrE and NqrF. Requires [2Fe-2S] cluster as cofactor. FAD is required as a cofactor.

It is found in the cell inner membrane. The catalysed reaction is a ubiquinone + n Na(+)(in) + NADH + H(+) = a ubiquinol + n Na(+)(out) + NAD(+). Functionally, NQR complex catalyzes the reduction of ubiquinone-1 to ubiquinol by two successive reactions, coupled with the transport of Na(+) ions from the cytoplasm to the periplasm. The first step is catalyzed by NqrF, which accepts electrons from NADH and reduces ubiquinone-1 to ubisemiquinone by a one-electron transfer pathway. In Haemophilus influenzae (strain 86-028NP), this protein is Na(+)-translocating NADH-quinone reductase subunit F.